The chain runs to 214 residues: Cytochrome b (214 aa).

The next 4 helical transmembrane spans lie at 31 to 51 (FGSM…FLAI), 75 to 96 (WIMQ…YIHI), 111 to 131 (WLSG…GYVL), and 176 to 196 (FFAL…LHIL). Residues His-81 and His-95 each coordinate heme b. 2 residues coordinate heme b: His-180 and His-194. His-199 serves as a coordination point for a ubiquinone.

This sequence belongs to the cytochrome b family. As to quaternary structure, the cytochrome bc1 complex contains 3 respiratory subunits (MT-CYB, CYC1 and UQCRFS1), 2 core proteins (UQCRC1 and UQCRC2) and probably 6 low-molecular weight proteins. Requires heme b as cofactor.

Its subcellular location is the mitochondrion inner membrane. Functionally, component of the ubiquinol-cytochrome c reductase complex (complex III or cytochrome b-c1 complex) that is part of the mitochondrial respiratory chain. The b-c1 complex mediates electron transfer from ubiquinol to cytochrome c. Contributes to the generation of a proton gradient across the mitochondrial membrane that is then used for ATP synthesis. This is Cytochrome b (MT-CYB) from Crotalus atrox (Western diamondback rattlesnake).